The primary structure comprises 590 residues: MGSTEQTTEILLCLSPVEVANLKEGINFFRNKSTGKDYILYKSKSRLRACKNVCKHQGGLFIKDIEDLAGRSVRCTKHNWKLDVSTMKYINPPESFCQDELVVEMDENNGLLLLELNPPNPWDSEPRSPEELDFGEVQITYLTHACMDLKLGDKRMVFDPWLIGPAFARGWWLLHEPPSDWLERLCQADLIYISHLHSDHLSYPTLKKLAGRRPDIPIYVGNTERPVFWNLNQSGVQLTNINVVPFGIWQQVDKNLRFMILMDGVHPEMDTCIIVEYKGHKILNTVDCTRPNGGRLPTKVALMMSDFAGGASGFPMTFSGGKFTEEWKAQFIKTERKKLLNYKAQLVKNLQPRIYCPFAGYFVESHPSDKYIKETNTKNDPNELNNLIKKNSDVITWTPRPGATLDLGRMLKDPTDSKGIIEPPEGTKIYKDSWDFEPYLEILNAAVGDEIFLHSSWIKEYFTWAGFKDYNLVVRMIETDEDFNPFPGGYDYLVDFLDLSFPKERPQREHPYEEIRSRVDVIRHVVKNGLLWDELYIGFQTRLQRDPDIYHHLFWNHFQIKLPLTPPNWRSFLTCCEQNGPGISQECKTT.

In terms of domain architecture, Rieske spans 14–112 (LSPVEVANLK…VEMDENNGLL (99 aa)). [2Fe-2S] cluster contacts are provided by Cys54, His56, Cys75, and His78.

It belongs to the CMP-Neu5Ac hydroxylase family. Requires [2Fe-2S] cluster as cofactor.

It is found in the cytoplasm. The catalysed reaction is CMP-N-acetyl-beta-neuraminate + 2 Fe(II)-[cytochrome b5] + O2 + 2 H(+) = CMP-N-glycoloyl-beta-neuraminate + 2 Fe(III)-[cytochrome b5] + H2O. Its pathway is amino-sugar metabolism; N-acetylneuraminate metabolism. In terms of biological role, sialic acids are components of carbohydrate chains of glycoconjugates and are involved in cell-cell recognition and cell-pathogen interactions. Catalyzes the conversion of CMP-N-acetylneuraminic acid (CMP-Neu5Ac) into its hydroxylated derivative CMP-N-glycolylneuraminic acid (CMP-Neu5Gc), a sialic acid abundantly expressed at the surface of many cells. The polypeptide is Cytidine monophosphate-N-acetylneuraminic acid hydroxylase (CMAH) (Macaca mulatta (Rhesus macaque)).